Consider the following 527-residue polypeptide: N-acetylglutamate synthase, mitochondrial (527 aa).

Residues 1–18 (MATAWVATALRSAAAARR) constitute a mitochondrion transit peptide. The interval 14–91 (AAARRLRSPG…PLESPAPPAG (78 aa)) is disordered. The segment at 19–369 (LRSPGGPGGS…CGTLFKNAER (351 aa)) is amino-acid kinase domain (AAK). Positions 54–63 (AHAEDAEGAK) are enriched in basic and acidic residues. Positions 77 to 89 (TPLPTPLESPAPP) are enriched in pro residues. Residues 368–519 (ERMLRVRNLD…HAKGLPDSFC (152 aa)) enclose the N-acetyltransferase domain. Residues Lys-394, Lys-437, and 467–472 (RSRVTN) each bind substrate.

Belongs to the acetyltransferase family. Homodimer. Homotetramer. Probably processed by mitochondrial processing peptidase (MPP). The long form has not yet been isolated. In terms of tissue distribution, highly expressed in the liver and small intestine. Weakly expressed in the kidney, spleen and testis.

The protein resides in the mitochondrion matrix. The enzyme catalyses L-glutamate + acetyl-CoA = N-acetyl-L-glutamate + CoA + H(+). It functions in the pathway amino-acid biosynthesis; L-arginine biosynthesis; N(2)-acetyl-L-ornithine from L-glutamate: step 1/4. Its activity is regulated as follows. Increased by L-arginine. Its function is as follows. Plays a role in the regulation of ureagenesis by producing the essential cofactor N-acetylglutamate (NAG), thus modulating carbamoylphosphate synthase I (CPS1) activity. The polypeptide is N-acetylglutamate synthase, mitochondrial (Nags) (Mus musculus (Mouse)).